A 669-amino-acid chain; its full sequence is Probable serine/threonine-protein kinase DDB_G0291918 (669 aa).

The region spanning 13–360 is the Protein kinase domain; that stretch reads YNNIKELGRG…LKETLNHPFL (348 aa). ATP contacts are provided by residues 19-27 and Lys42; that span reads LGRGVSGVV. Asp141 acts as the Proton acceptor in catalysis. The segment covering 396–405 has biased composition (low complexity); the sequence is QNQQQQQQQQ. 2 disordered regions span residues 396–518 and 530–550; these read QNQQ…APTF and FPKLLPPPTKDAPPLETMNWR. Over residues 406 to 418 the composition is skewed to polar residues; that stretch reads KSFSTSSLPQVNH. Low complexity-rich tracts occupy residues 419–449 and 457–494; these read NNDTNNNNNNNNNNNNNNNNNNNNNNNNNNN and QSNNSSSSSSSSSPPSPTISKSSPSSLSSSLSPSSSTD.

It belongs to the protein kinase superfamily. Ser/Thr protein kinase family.

The enzyme catalyses L-seryl-[protein] + ATP = O-phospho-L-seryl-[protein] + ADP + H(+). The catalysed reaction is L-threonyl-[protein] + ATP = O-phospho-L-threonyl-[protein] + ADP + H(+). This Dictyostelium discoideum (Social amoeba) protein is Probable serine/threonine-protein kinase DDB_G0291918.